We begin with the raw amino-acid sequence, 687 residues long: MTEITAEGNASITTTVIDNKNGSVPKSPGKVLKRTVTEDIVTTFSSPAAWLLVIALIITWSAVAIVMFDLVDYKNFSASSIAKIGSDPLKLVNDAVEETTDWIYGFFSLLSDIISSDGDEDDEDADEDIDKGEIEEPPLKRKEIQKEKAEKQEKPEKKIQTKVSHREKEKGKEKLKGEKPEKKATHKEKLEKKERTETKMAAKEDKKIKTKEKTEEKAKKEMKVGKQEKAKPAAAKAKETPKTTPKAREKDDKETPAVPKHEQKDQYAFCRYMIDMFVHGDLKPGQSPAVPPPSLTASRPALSTPSLEEKEKEEKKKVEKKVTSDTKKKEKGEAKKKSEKETVIDGKGKEPGKPPETKQTTTKLTTQAAATKDEKKEDSKKMKKPPEEKPKGKKQEKKEKHIEPAKTPKKEHPAPSEKHRKAKAEQAKEEIAPASTKKALHGKKEEKAKTVEQGKDVKPKLPQPQLKKEEKSEPQPKKEVKLETQLKKEEKSEPQVKKEAKLASSEKGQTRKQNITRPEQVIPHGKPEQKVPKQIKAITAEKTEKAERQEKYHPSIKTEGKPEVTDSGKKKIEKPEKESKVPPKQENLQVRNVTRAEKRGKISKDSKDAPAPKKDKDSKDVLHSKKDKEVTNNVSSPKKQKSPISFFQCVYLDGYNGYGFQFPVTPVQHSGENPGKSNSPGQKQQEQ.

The Cytoplasmic segment spans residues 1–47 (MTEITAEGNASITTTVIDNKNGSVPKSPGKVLKRTVTEDIVTTFSSP). Residues 48–68 (AAWLLVIALIITWSAVAIVMF) traverse the membrane as a helical segment. The Lumenal segment spans residues 69–687 (DLVDYKNFSA…NSPGQKQQEQ (619 aa)). Residues 117–130 (DGDEDDEDADEDID) are compositionally biased toward acidic residues. Disordered regions lie at residues 117–265 (DGDE…EQKD), 280–643 (GDLK…QKSP), and 660–687 (FQFP…QQEQ). Residues 131 to 265 (KGEIEEPPLK…PAVPKHEQKD (135 aa)) are compositionally biased toward basic and acidic residues. A compositionally biased stretch (polar residues) spans 295–306 (LTASRPALSTPS). Phosphoserine is present on residues serine 303 and serine 306. A compositionally biased stretch (basic and acidic residues) spans 307–356 (LEEKEKEEKKKVEKKVTSDTKKKEKGEAKKKSEKETVIDGKGKEPGKPPE). Residues 357–370 (TKQTTTKLTTQAAA) are compositionally biased toward low complexity. Composition is skewed to basic and acidic residues over residues 371–390 (TKDE…EEKP), 396–431 (EKKE…KEEI), 442–459 (GKKE…DVKP), and 466–501 (LKKE…KEAK). Asparagine 514 is a glycosylation site (N-linked (GlcNAc...) asparagine). 2 stretches are compositionally biased toward basic and acidic residues: residues 539–583 (TAEK…KVPP) and 594–630 (TRAE…DKEV). 2 stretches are compositionally biased toward polar residues: residues 631 to 643 (TNNV…QKSP) and 667 to 687 (VQHS…QQEQ).

As to quaternary structure, homooligomer of variable subunit number; disulfide-linked. Interacts with CASQ1 in skeletal muscle. Interacts with CASQ2. Interacts with RYR1 in skeletal muscle. Phosphorylated by CaMK2. Post-translationally, N-glycosylated. Detected in skeletal muscle (at protein level). Detected in skeletal muscle.

The protein localises to the sarcoplasmic reticulum membrane. Its subcellular location is the microsome. It is found in the cell membrane. The protein resides in the sarcolemma. Its function is as follows. Contributes to the regulation of lumenal Ca2+ release via the sarcoplasmic reticulum calcium release channels RYR1 and RYR2, a key step in triggering skeletal and heart muscle contraction. Required for normal organization of the triad junction, where T-tubules and the sarcoplasmic reticulum terminal cisternae are in close contact. Required for normal skeletal muscle strength. Plays a role in excitation-contraction coupling in the heart and in regulating the rate of heart beats. The sequence is that of Triadin from Rattus norvegicus (Rat).